The following is an 860-amino-acid chain: MQEQYRPDLLEQEVQKYWQNNQTFKAVKDSSKEKYYCLSMFPYPSGRLHMGHVRNYTIADVVSRYQRMNGKNVLQPVGWDAFGLPAEGAAVKNKTAPAKWTYENIDYMKNQLKMLGFSYDWDREIATCKPEYYKWEQWFFTELYKKGLVYKKTSVVNWCPNDETVLANEQVHEGCCWRCDTPVEQKEIPQWFIKITDYAEQLLSGLDTLPEWPDMVKTMQRNWIGRSEGVEITFKIENSDETVAVYTTRPDTFYGVSYMAVAAGHPLAEKAAQNNAELARFIQECKNTKVAEAELATMEKKGMATGINAIHPITGKPVPVWVANFVLMHYGTGAVMAVPAHDQRDFEFATKYGLPIKQVIAPMNGEEIDLTKAAFTEHGKLVNSAEFDGLDFEAAFNGIADKLEKMGVGKRQVNYRLRDWGVSRQRYWGAPIPMLTLENGDVVPAPLQDLPIVLPEDVVMDGVKSPIKADPDWAKTSYNGQPALKETDTFDTFMESSWYYARYTSPQYHEGMLDSDEANYWLPVDQYIGGIEHATMHLLYFRFFHKLLRDAGLVSTDEPTKKLLCQGMVLADAFYYTSPTNERIWVSPTKVMLERDEKGRILKATDDEGHELVHAGMTKMSKSKNNGIDPQEMVEKYGADTVRLFMMFASPAEMTLEWQESGVEGAKRFLGRLWNLVFEYNKNPVKTAPNPTALSSAQKALRRDVHKTIAKVSDDIGRRQTFNTAIAAIMELMNKLTRAPLTDEQDRAVMGEALSAVVRMLYPITPHICFQLWKDLGNEDIIDFAPWVQADEAAMIDDEKLVVVQVNGKVRGKITVPADMAEEEIKRVALAEENVQKFLDGLNIVKVIYVPGKLLSFVAK.

A 'HIGH' region motif is present at residues 42–52 (PYPSGRLHMGH). Positions 619–623 (KMSKS) match the 'KMSKS' region motif. ATP is bound at residue Lys-622.

Belongs to the class-I aminoacyl-tRNA synthetase family.

The protein resides in the cytoplasm. It catalyses the reaction tRNA(Leu) + L-leucine + ATP = L-leucyl-tRNA(Leu) + AMP + diphosphate. This chain is Leucine--tRNA ligase, found in Mannheimia succiniciproducens (strain KCTC 0769BP / MBEL55E).